A 176-amino-acid chain; its full sequence is Ribosome rescue factor SmrB (176 aa).

The disordered stretch occupies residues 29 to 51; it reads TIIQQPKKNTKQKEIKRSNREAS. Residues 39 to 51 show a composition bias toward basic and acidic residues; the sequence is KQKEIKRSNREAS. A Smr domain is found at 97–172; the sequence is LDMHGMTQQE…GDGALLVLLS (76 aa).

It belongs to the SmrB family. Associates with collided ribosomes, but not with correctly translating polysomes.

Functionally, acts as a ribosome collision sensor. Detects stalled/collided disomes (pairs of ribosomes where the leading ribosome is stalled and a second ribosome has collided with it) and endonucleolytically cleaves mRNA at the 5' boundary of the stalled ribosome. Stalled/collided disomes form a new interface (primarily via the 30S subunits) that binds SmrB. Cleaved mRNA becomes available for tmRNA ligation, leading to ribosomal subunit dissociation and rescue of stalled ribosomes. The chain is Ribosome rescue factor SmrB from Vibrio parahaemolyticus serotype O3:K6 (strain RIMD 2210633).